A 90-amino-acid chain; its full sequence is Small ribosomal subunit protein mS37 (90 aa).

A disulfide bridge connects residues cysteine 27 and cysteine 58.

This sequence belongs to the mitochondrion-specific ribosomal protein mS37 family. In terms of assembly, component of the mitochondrial small ribosomal subunit (mt-SSU). Mature N.crassa 74S mitochondrial ribosomes consist of a small (37S) and a large (54S) subunit. The 37S small subunit contains a 16S ribosomal RNA (16S mt-rRNA) and 32 different proteins. The 54S large subunit contains a 23S rRNA (23S mt-rRNA) and 42 different proteins.

It localises to the mitochondrion. Its function is as follows. Component of the mitochondrial ribosome (mitoribosome), a dedicated translation machinery responsible for the synthesis of mitochondrial genome-encoded proteins, including at least some of the essential transmembrane subunits of the mitochondrial respiratory chain. The mitoribosomes are attached to the mitochondrial inner membrane and translation products are cotranslationally integrated into the membrane. The chain is Small ribosomal subunit protein mS37 (mrp10) from Neurospora crassa (strain ATCC 24698 / 74-OR23-1A / CBS 708.71 / DSM 1257 / FGSC 987).